The following is a 201-amino-acid chain: Recombination protein RecR (201 aa).

Residues Cys60–Cys75 form a C4-type zinc finger. Residues Ser83 to Pro178 form the Toprim domain.

It belongs to the RecR family.

In terms of biological role, may play a role in DNA repair. It seems to be involved in an RecBC-independent recombinational process of DNA repair. It may act with RecF and RecO. The protein is Recombination protein RecR of Methylocella silvestris (strain DSM 15510 / CIP 108128 / LMG 27833 / NCIMB 13906 / BL2).